Consider the following 963-residue polypeptide: Glycine dehydrogenase (decarboxylating) (963 aa).

Lysine 707 carries the N6-(pyridoxal phosphate)lysine modification.

It belongs to the GcvP family. The glycine cleavage system is composed of four proteins: P, T, L and H. It depends on pyridoxal 5'-phosphate as a cofactor.

The catalysed reaction is N(6)-[(R)-lipoyl]-L-lysyl-[glycine-cleavage complex H protein] + glycine + H(+) = N(6)-[(R)-S(8)-aminomethyldihydrolipoyl]-L-lysyl-[glycine-cleavage complex H protein] + CO2. Its function is as follows. The glycine cleavage system catalyzes the degradation of glycine. The P protein binds the alpha-amino group of glycine through its pyridoxal phosphate cofactor; CO(2) is released and the remaining methylamine moiety is then transferred to the lipoamide cofactor of the H protein. The protein is Glycine dehydrogenase (decarboxylating) of Dechloromonas aromatica (strain RCB).